The following is a 287-amino-acid chain: Putative ABC transporter ATP-binding protein MM_1038 (287 aa).

One can recognise an ABC transporter domain in the interval 5-238; the sequence is LENISVFYSR…ENVPLPPVAS (234 aa). 40 to 47 serves as a coordination point for ATP; the sequence is GEKGAGKS.

This sequence belongs to the ABC transporter superfamily.

Its subcellular location is the cell membrane. Its function is as follows. Probably part of an ABC transporter complex. Responsible for energy coupling to the transport system. This is Putative ABC transporter ATP-binding protein MM_1038 from Methanosarcina mazei (strain ATCC BAA-159 / DSM 3647 / Goe1 / Go1 / JCM 11833 / OCM 88) (Methanosarcina frisia).